A 911-amino-acid polypeptide reads, in one-letter code: Protein argonaute 4B (911 aa).

Disordered stretches follow at residues 1 to 51 and 149 to 171; these read MDAH…RPGL and KTAA…KRVR. The region spanning 281–396 is the PAZ domain; sequence PVIDFLLANQ…FPIELCSLIP (116 aa). One can recognise a Piwi domain in the interval 565 to 872; it reads FLLCLLPERK…AAAQVGTFLK (308 aa).

It belongs to the argonaute family. Ago subfamily.

Probably involved in the RNA silencing pathway. May bind to short RNAs such as microRNAs (miRNAs) or short interfering RNAs (siRNAs), and represses the translation of mRNAs which are complementary to them. The sequence is that of Protein argonaute 4B (AGO4B) from Oryza sativa subsp. japonica (Rice).